The sequence spans 538 residues: Chaperonin GroEL (538 aa).

ATP is bound by residues 29-32 (TIGP), 86-90 (DGTTT), glycine 413, 476-478 (NAA), and aspartate 492.

Belongs to the chaperonin (HSP60) family. As to quaternary structure, forms a cylinder of 14 subunits composed of two heptameric rings stacked back-to-back. Interacts with the co-chaperonin GroES.

Its subcellular location is the cytoplasm. The enzyme catalyses ATP + H2O + a folded polypeptide = ADP + phosphate + an unfolded polypeptide.. Together with its co-chaperonin GroES, plays an essential role in assisting protein folding. The GroEL-GroES system forms a nano-cage that allows encapsulation of the non-native substrate proteins and provides a physical environment optimized to promote and accelerate protein folding. This chain is Chaperonin GroEL, found in Staphylococcus aureus (strain NCTC 8325 / PS 47).